The chain runs to 235 residues: Large ribosomal subunit protein uL1 (235 aa).

It belongs to the universal ribosomal protein uL1 family. As to quaternary structure, part of the 50S ribosomal subunit.

In terms of biological role, binds directly to 23S rRNA. The L1 stalk is quite mobile in the ribosome, and is involved in E site tRNA release. Its function is as follows. Protein L1 is also a translational repressor protein, it controls the translation of the L11 operon by binding to its mRNA. This chain is Large ribosomal subunit protein uL1, found in Methylobacterium nodulans (strain LMG 21967 / CNCM I-2342 / ORS 2060).